Here is a 447-residue protein sequence, read N- to C-terminus: MGFKYLKIKNPKVILTEWIPFGKNYMTEFIDRITLKEYQRKRIKYFTASERRDIRYKAVFETSEYQTTVNIIEFIPETSVKFTAEIIGERKKDVFIYVDYLGRCIYSSEITKAGDEEEIVSLDNLSFVIPDLILDSSRIMSHLISPPQRYLLETLYGEIKVYKHVTVLTETVVNIDENTILEISQVIGAVKNIIEIDDGLIIFGDFGIFISHKNPEKFEKFIYYYPFIRSITGVSRDLFFKLNNIASKLEVISNTLASGVDLEDITEIRGELSRIDRELAVIEIVCGYLKEIVEFLNSSYPPNFGDFDLMILEKVEAERKLRRLIYRIAEIENILKSNDSLATSLTRLLTTISEDLERKIANQLAENTKYQVAIGEAMEVLEIGIFGVYALEAAHILLLTSGKDEILHHIKILGFPLEFWIILVVTILGVYVGKIVIEYRKKKVLGE.

2 helical membrane passes run 380–400 (VLEIGIFGVYALEAAHILLLT) and 412–432 (ILGFPLEFWIILVVTILGVYV).

It localises to the cell membrane. This is an uncharacterized protein from Methanocaldococcus jannaschii (strain ATCC 43067 / DSM 2661 / JAL-1 / JCM 10045 / NBRC 100440) (Methanococcus jannaschii).